A 541-amino-acid polypeptide reads, in one-letter code: ATP synthase subunit beta (541 aa).

The interval 1–65 is disordered; it reads MAKAVTSSKG…TPVKKEERAK (65 aa). 2 stretches are compositionally biased toward basic and acidic residues: residues 25-36 and 52-65; these read VKKDASKSKDAS and AAKD…ERAK. Residue 214–221 participates in ATP binding; it reads GGAGVGKT.

The protein belongs to the ATPase alpha/beta chains family. In terms of assembly, F-type ATPases have 2 components, CF(1) - the catalytic core - and CF(0) - the membrane proton channel. CF(1) has five subunits: alpha(3), beta(3), gamma(1), delta(1), epsilon(1). CF(0) has three main subunits: a(1), b(2) and c(9-12). The alpha and beta chains form an alternating ring which encloses part of the gamma chain. CF(1) is attached to CF(0) by a central stalk formed by the gamma and epsilon chains, while a peripheral stalk is formed by the delta and b chains.

Its subcellular location is the cell inner membrane. It catalyses the reaction ATP + H2O + 4 H(+)(in) = ADP + phosphate + 5 H(+)(out). Functionally, produces ATP from ADP in the presence of a proton gradient across the membrane. The catalytic sites are hosted primarily by the beta subunits. The polypeptide is ATP synthase subunit beta (Bartonella tribocorum (strain CIP 105476 / IBS 506)).